Here is a 322-residue protein sequence, read N- to C-terminus: Sideroflexin-1 (322 aa).

At Ser2 the chain carries N-acetylserine. The Mitochondrial matrix segment spans residues 2–102; that stretch reads SGELPPNINI…MSAQVPMNMT (101 aa). Residues 103–120 traverse the membrane as a helical segment; sequence ITGCMMTFYRTTPAVLFW. At 121-146 the chain is on the mitochondrial intermembrane side; that stretch reads QWINQSFNAVVNYTNRSGDAPLTVNE. The helical transmembrane segment at 147–167 threads the bilayer; the sequence is LGTAYVSATTGAVATALGLNA. Topologically, residues 168-174 are mitochondrial matrix; that stretch reads LTKHVSP. The helical transmembrane segment at 175 to 195 threads the bilayer; sequence LIGRFVPFAAVAAANCINIPL. Topologically, residues 196 to 228 are mitochondrial intermembrane; the sequence is MRQRELKVGIPVTDENGNRLGESANAAKQAITQ. A helical membrane pass occupies residues 229–249; the sequence is VVVSRILMAAPGMAIPPFIMN. Over 250–266 the chain is Mitochondrial matrix; the sequence is TLEKKAFLKRFPWMSAP. The helical transmembrane segment at 267–287 threads the bilayer; that stretch reads VQVGIVGFCLVFATPLCCALF. At 288 to 322 the chain is on the mitochondrial intermembrane side; that stretch reads PQKSSMSVTSLEAELQARIRETYPELRRVYFNKGL.

Belongs to the sideroflexin family.

The protein resides in the mitochondrion inner membrane. It carries out the reaction L-serine(in) = L-serine(out). The catalysed reaction is L-alanine(in) = L-alanine(out). The enzyme catalyses L-cysteine(in) = L-cysteine(out). In terms of biological role, amino acid transporter importing serine, an essential substrate of the mitochondrial branch of the one-carbon pathway, into mitochondria. Mitochondrial serine is then converted to glycine and formate, which exits to the cytosol where it is used to generate the charged folates that serve as one-carbon donors. May also transport other amino acids including alanine and cysteine. The protein is Sideroflexin-1 (SFXN1) of Bos taurus (Bovine).